A 393-amino-acid polypeptide reads, in one-letter code: D-alanyl-D-alanine carboxypeptidase DacA (393 aa).

Positions 1 to 18 (MLKRTTKIAFLSSFVALS) are cleaved as a signal peptide. Serine 65 acts as the Acyl-ester intermediate in catalysis. The Proton acceptor role is filled by lysine 68. Serine 128 is an active-site residue. Residue lysine 231 coordinates substrate.

The protein belongs to the peptidase S11 family.

The protein localises to the cell inner membrane. The catalysed reaction is Preferential cleavage: (Ac)2-L-Lys-D-Ala-|-D-Ala. Also transpeptidation of peptidyl-alanyl moieties that are N-acyl substituents of D-alanine.. It participates in cell wall biogenesis; peptidoglycan biosynthesis. Functionally, removes C-terminal D-alanyl residues from sugar-peptide cell wall precursors. In Haemophilus influenzae (strain ATCC 51907 / DSM 11121 / KW20 / Rd), this protein is D-alanyl-D-alanine carboxypeptidase DacA (dacA).